Here is a 343-residue protein sequence, read N- to C-terminus: Adenine deaminase (343 aa).

Residues histidine 17, histidine 19, and histidine 197 each coordinate Zn(2+). Glutamate 200 functions as the Proton donor in the catalytic mechanism. Aspartate 278 lines the Zn(2+) pocket. Substrate is bound at residue aspartate 279.

It belongs to the metallo-dependent hydrolases superfamily. Adenosine and AMP deaminases family. Adenine deaminase type 2 subfamily. Zn(2+) is required as a cofactor.

The enzyme catalyses adenine + H2O + H(+) = hypoxanthine + NH4(+). Its function is as follows. Catalyzes the hydrolytic deamination of adenine to hypoxanthine. Plays an important role in the purine salvage pathway and in nitrogen catabolism. In Rhodopseudomonas palustris (strain BisB18), this protein is Adenine deaminase.